A 322-amino-acid chain; its full sequence is Carnosine N-methyltransferase 2 (322 aa).

Glu58 is a substrate binding site. Gly90, Glu119, Ser150, and Ile172 together coordinate S-adenosyl-L-methionine. Asn313 is a substrate binding site.

It belongs to the class I-like SAM-binding methyltransferase superfamily. HNMT family. Monomer.

It catalyses the reaction carnosine + S-adenosyl-L-methionine = anserine + S-adenosyl-L-homocysteine + H(+). N-methyltransferase that mediates the formation of anserine (beta-alanyl-N(Pi)-methyl-L-histidine) from carnosine. Anserine, a methylated derivative of carnosine (beta-alanyl-L-histidine), is an abundant constituent of vertebrate skeletal muscles. This Gallus gallus (Chicken) protein is Carnosine N-methyltransferase 2.